The chain runs to 327 residues: Transcription factor bHLH48 (327 aa).

Residues 137–179 (EPAETDSMVENQNQSYSSGKRKEREKKVKSSTKKNKSSVESDK) form a disordered region. Residues 191 to 241 (QATDNHSLAERARREKINARMKLLQELVPGCDKIQGTALVLDEIINHVQTL) form the bHLH domain.

Homodimer. As to expression, expressed in leaves, stems, and flowers.

Its subcellular location is the nucleus. This Arabidopsis thaliana (Mouse-ear cress) protein is Transcription factor bHLH48 (BHLH48).